Consider the following 211-residue polypeptide: Regulator of G-protein signaling 2 (211 aa).

Residues 32–66 form a necessary for membrane association region; the sequence is KMKRTLLKDWKTRLSYFLQNSSAPGKPKTGKKSKQ. A necessary to inhibit protein synthesis region spans residues 79–116; that stretch reads LWAEAFDELLASKYGLAAFRAFLKSEFCEENIEFWLAC. An RGS domain is found at 83–199; it reads AFDELLASKY…LESEFYQDLC (117 aa).

In terms of assembly, interacts with GNAQ. Does not interact with GNAI1 and GNAI3. Interacts with EIF2B5. Interacts with PRKG1 (isoform alpha). Phosphorylated by protein kinase C. Phosphorylation by PRKG1 leads to activation of RGS2 activity. As to expression, expressed in a wide variety of tissues.

The protein resides in the cell membrane. The protein localises to the cytoplasm. It localises to the nucleus. It is found in the nucleolus. Regulates G protein-coupled receptor signaling cascades. Inhibits signal transduction by increasing the GTPase activity of G protein alpha subunits, thereby driving them into their inactive GDP-bound form. It is involved in the negative regulation of the angiotensin-activated signaling pathway. Plays a role in the regulation of blood pressure in response to signaling via G protein-coupled receptors and GNAQ. Plays a role in regulating the constriction and relaxation of vascular smooth muscle. Binds EIF2B5 and blocks its activity, thereby inhibiting the translation of mRNA into protein. The polypeptide is Regulator of G-protein signaling 2 (Rgs2) (Mus musculus (Mouse)).